A 475-amino-acid polypeptide reads, in one-letter code: Aspartyl/glutamyl-tRNA(Asn/Gln) amidotransferase subunit B (475 aa).

Belongs to the GatB/GatE family. GatB subfamily. Heterotrimer of A, B and C subunits.

The catalysed reaction is L-glutamyl-tRNA(Gln) + L-glutamine + ATP + H2O = L-glutaminyl-tRNA(Gln) + L-glutamate + ADP + phosphate + H(+). It carries out the reaction L-aspartyl-tRNA(Asn) + L-glutamine + ATP + H2O = L-asparaginyl-tRNA(Asn) + L-glutamate + ADP + phosphate + 2 H(+). Functionally, allows the formation of correctly charged Asn-tRNA(Asn) or Gln-tRNA(Gln) through the transamidation of misacylated Asp-tRNA(Asn) or Glu-tRNA(Gln) in organisms which lack either or both of asparaginyl-tRNA or glutaminyl-tRNA synthetases. The reaction takes place in the presence of glutamine and ATP through an activated phospho-Asp-tRNA(Asn) or phospho-Glu-tRNA(Gln). In Bacillus cereus (strain ZK / E33L), this protein is Aspartyl/glutamyl-tRNA(Asn/Gln) amidotransferase subunit B.